A 122-amino-acid polypeptide reads, in one-letter code: uncharacterized protein (122 aa).

The next 2 membrane-spanning stretches (helical) occupy residues 14–34 and 83–103; these read WLWILTAILAISFFVICFNNV and IIGVAFGLGFVGTMLIDYFII.

It is found in the cell membrane. This is an uncharacterized protein from Ureaplasma parvum serovar 3 (strain ATCC 700970).